Here is a 966-residue protein sequence, read N- to C-terminus: Aminopeptidase N (966 aa).

At 1 to 8 (MAKGFYIS) the chain is on the cytoplasmic side. A helical; Signal-anchor for type II membrane protein transmembrane segment spans residues 9–32 (KSLGILGILLGVAALCTIVALSVV). The segment at 33–65 (YRQEKNKNTSQSPSMAPLNPTATSSPATTLDQN) is cytosolic Ser/Thr-rich junction. Topologically, residues 33–966 (YRQEKNKNTS…VLAWFTANSA (934 aa)) are extracellular. N-linked (GlcNAc...) asparagine glycans are attached at residues N40 and N125. The tract at residues 40–61 (NTSQSPSMAPLNPTATSSPATT) is disordered. The segment at 66 to 966 (LPWNRYRLPK…VLAWFTANSA (901 aa)) is metalloprotease. The residue at position 173 (Y173) is a Sulfotyrosine. N-linked (GlcNAc...) asparagine glycosylation is found at N259 and N315. 348–352 (GAMEN) contributes to the substrate binding site. H384 provides a ligand contact to Zn(2+). The active-site Proton acceptor is the E385. Zn(2+) contacts are provided by H388 and E407. Y415 and Y420 each carry sulfotyrosine. Residues N552, N570, N624, and N734 are each glycosylated (N-linked (GlcNAc...) asparagine). Disulfide bonds link C760/C767 and C797/C833. N-linked (GlcNAc...) asparagine glycosylation occurs at N817. Residue Y852 is modified to Phosphotyrosine. At Y912 the chain carries Sulfotyrosine.

The protein belongs to the peptidase M1 family. In terms of assembly, homodimer. Interacts with SLC6A19. Requires Zn(2+) as cofactor. In terms of processing, sulfated. N- and O-glycosylated. Post-translationally, may undergo proteolysis and give rise to a soluble form.

It localises to the cell membrane. The catalysed reaction is Release of an N-terminal amino acid, Xaa-|-Yaa- from a peptide, amide or arylamide. Xaa is preferably Ala, but may be most amino acids including Pro (slow action). When a terminal hydrophobic residue is followed by a prolyl residue, the two may be released as an intact Xaa-Pro dipeptide.. Its function is as follows. Broad specificity aminopeptidase which plays a role in the final digestion of peptides generated from hydrolysis of proteins by gastric and pancreatic proteases. Also involved in the processing of various peptides including peptide hormones, such as angiotensin III and IV, neuropeptides, and chemokines. May also be involved the cleavage of peptides bound to major histocompatibility complex class II molecules of antigen presenting cells. May have a role in angiogenesis and promote cholesterol crystallization. May have a role in amino acid transport by acting as binding partner of amino acid transporter SLC6A19 and regulating its activity. The polypeptide is Aminopeptidase N (ANPEP) (Oryctolagus cuniculus (Rabbit)).